The following is a 682-amino-acid chain: DNA ligase (682 aa).

NAD(+) is bound by residues 42–46 (DAAYD), 88–89 (SL), and Glu-121. The N6-AMP-lysine intermediate role is filled by Lys-123. NAD(+)-binding residues include Arg-144, Glu-180, Lys-291, and Lys-315. Zn(2+) is bound by residues Cys-409, Cys-412, Cys-427, and Cys-433. One can recognise a BRCT domain in the interval 601–682 (AAGGALAGKT…FRSLAGLPPG (82 aa)).

Belongs to the NAD-dependent DNA ligase family. LigA subfamily. Requires Mg(2+) as cofactor. It depends on Mn(2+) as a cofactor.

The catalysed reaction is NAD(+) + (deoxyribonucleotide)n-3'-hydroxyl + 5'-phospho-(deoxyribonucleotide)m = (deoxyribonucleotide)n+m + AMP + beta-nicotinamide D-nucleotide.. DNA ligase that catalyzes the formation of phosphodiester linkages between 5'-phosphoryl and 3'-hydroxyl groups in double-stranded DNA using NAD as a coenzyme and as the energy source for the reaction. It is essential for DNA replication and repair of damaged DNA. The chain is DNA ligase from Acidiphilium cryptum (strain JF-5).